An 87-amino-acid chain; its full sequence is UPF0250 protein ECA1299 (87 aa).

This sequence belongs to the UPF0250 family.

This Pectobacterium atrosepticum (strain SCRI 1043 / ATCC BAA-672) (Erwinia carotovora subsp. atroseptica) protein is UPF0250 protein ECA1299.